The primary structure comprises 297 residues: 4-hydroxy-tetrahydrodipicolinate synthase (297 aa).

Thr-50 provides a ligand contact to pyruvate. Residue Tyr-138 is the Proton donor/acceptor of the active site. Lys-166 acts as the Schiff-base intermediate with substrate in catalysis. Ile-208 is a pyruvate binding site.

It belongs to the DapA family. As to quaternary structure, homotetramer; dimer of dimers.

It is found in the cytoplasm. It catalyses the reaction L-aspartate 4-semialdehyde + pyruvate = (2S,4S)-4-hydroxy-2,3,4,5-tetrahydrodipicolinate + H2O + H(+). The protein operates within amino-acid biosynthesis; L-lysine biosynthesis via DAP pathway; (S)-tetrahydrodipicolinate from L-aspartate: step 3/4. Its function is as follows. Catalyzes the condensation of (S)-aspartate-beta-semialdehyde [(S)-ASA] and pyruvate to 4-hydroxy-tetrahydrodipicolinate (HTPA). This chain is 4-hydroxy-tetrahydrodipicolinate synthase, found in Desulfotalea psychrophila (strain LSv54 / DSM 12343).